A 436-amino-acid polypeptide reads, in one-letter code: Phosphate-repressible acid phosphatase (436 aa).

A signal peptide spans 1–20 (MKGTAASALLIALSATAAQA). Residues asparagine 227, asparagine 283, and asparagine 304 are each glycosylated (N-linked (GlcNAc...) asparagine).

In terms of assembly, monomer.

It catalyses the reaction a phosphate monoester + H2O = an alcohol + phosphate. This is Phosphate-repressible acid phosphatase (pacA) from Aspergillus niger.